Here is a 397-residue protein sequence, read N- to C-terminus: Glia-derived nexin (397 aa).

An N-terminal signal peptide occupies residues 1–19 (MNWHFPFFILTTVTLYSVH). The N-linked (GlcNAc...) asparagine glycan is linked to asparagine 159.

This sequence belongs to the serpin family. Most abundant in seminal vesicles.

It is found in the secreted. Its subcellular location is the extracellular space. In terms of biological role, serine protease inhibitor with activity toward thrombin, trypsin, and urokinase. Promotes neurite extension by inhibiting thrombin. Binds heparin. The polypeptide is Glia-derived nexin (Serpine2) (Mus musculus (Mouse)).